Here is a 251-residue protein sequence, read N- to C-terminus: Ly6/PLAUR domain-containing protein 5 (251 aa).

The signal sequence occupies residues 1–25 (MAMGVPRVILLCLFGAALCLTGSQA). 2 N-linked (GlcNAc...) asparagine glycosylation sites follow: N120 and N174. The UPAR/Ly6 domain maps to 135 to 214 (CYACIGVHQD…GSCCEGYLCN (80 aa)). Residue A225 is the site of GPI-anchor amidated alanine attachment. Residues 226–251 (SATTPPRALQVLALLLPVLLLVGLSA) constitute a propeptide, removed in mature form.

It is found in the cell membrane. This Homo sapiens (Human) protein is Ly6/PLAUR domain-containing protein 5 (LYPD5).